The chain runs to 368 residues: Homoserine O-acetyltransferase (368 aa).

Residues 43 to 346 (ILLEHALTGT…EYGHDAFLVE (304 aa)) enclose the AB hydrolase-1 domain. Ser145 (nucleophile) is an active-site residue. Arg212 provides a ligand contact to substrate. Catalysis depends on residues Asp307 and His340. Asp341 serves as a coordination point for substrate.

It belongs to the AB hydrolase superfamily. MetX family. Homodimer.

Its subcellular location is the cytoplasm. It catalyses the reaction L-homoserine + acetyl-CoA = O-acetyl-L-homoserine + CoA. The protein operates within amino-acid biosynthesis; L-methionine biosynthesis via de novo pathway; O-acetyl-L-homoserine from L-homoserine: step 1/1. Its function is as follows. Transfers an acetyl group from acetyl-CoA to L-homoserine, forming acetyl-L-homoserine. The polypeptide is Homoserine O-acetyltransferase (Listeria monocytogenes serovar 1/2a (strain ATCC BAA-679 / EGD-e)).